The sequence spans 210 residues: Shikimate kinase (210 aa).

Residue 34-39 (GAGKSV) coordinates ATP. Ser-38 provides a ligand contact to Mg(2+). Asp-56, Arg-80, and Gly-102 together coordinate substrate. Arg-140 is a binding site for ATP. Residue Arg-159 coordinates substrate.

It belongs to the shikimate kinase family. In terms of assembly, monomer. Mg(2+) serves as cofactor.

The protein localises to the cytoplasm. The catalysed reaction is shikimate + ATP = 3-phosphoshikimate + ADP + H(+). Its pathway is metabolic intermediate biosynthesis; chorismate biosynthesis; chorismate from D-erythrose 4-phosphate and phosphoenolpyruvate: step 5/7. Functionally, catalyzes the specific phosphorylation of the 3-hydroxyl group of shikimic acid using ATP as a cosubstrate. This Bartonella quintana (strain Toulouse) (Rochalimaea quintana) protein is Shikimate kinase.